We begin with the raw amino-acid sequence, 218 residues long: Adenylate kinase (218 aa).

10 to 15 (GAGKGT) contacts ATP. Residues 30-59 (STGDMLRNAAKEGKPLGLEAKKIMDAGQLV) form an NMP region. Residues Thr31, Arg36, 57 to 59 (QLV), 85 to 88 (GFPR), and Gln92 each bind AMP. Residues 122 to 159 (GRRVHLASGRSYHVMFNPPKQEGLDDATGEPLVQRADD) form an LID region. ATP-binding positions include Arg123 and 132-133 (SY). Arg156 and Arg167 together coordinate AMP. Gly203 contributes to the ATP binding site.

It belongs to the adenylate kinase family. Monomer.

The protein resides in the cytoplasm. It carries out the reaction AMP + ATP = 2 ADP. The protein operates within purine metabolism; AMP biosynthesis via salvage pathway; AMP from ADP: step 1/1. Its function is as follows. Catalyzes the reversible transfer of the terminal phosphate group between ATP and AMP. Plays an important role in cellular energy homeostasis and in adenine nucleotide metabolism. In Chlorobium chlorochromatii (strain CaD3), this protein is Adenylate kinase.